The chain runs to 1436 residues: Pleiotropic drug resistance protein 1 (1436 aa).

In terms of domain architecture, ABC transporter 1 spans 165–438 (LDSIHILPSK…FESMGFKCPE (274 aa)). 198–205 (GPPGSGKT) provides a ligand contact to ATP. The region spanning 516–729 (QLLKVCTERE…SVNAILVNEF (214 aa)) is the ABC transmembrane type-2 1 domain. 7 consecutive transmembrane segments (helical) span residues 534–554 (FVYLFKFFQLLIIALMTMTIF), 567–587 (GGIYSGALFFVVIMIMFNGLS), 622–642 (IPVTFAEVGMWVFLTYYVMGF), 653–673 (FLLLLLVNQMASALFRFIAAV), 679–699 (VASTFGAFALLLQFALGGFIL), 707–727 (WWIWGYWTSPLMYSVNAILVN), and 764–784 (IGVGALAGFIVMFNIAYSVAL). The disordered stretch occupies residues 796–826 (TISDESENNESESSPQITSTQEGDSASENKK). Polar residues predominate over residues 810–821 (PQITSTQEGDSA). The region spanning 838–1090 (ITFDEVVYSV…HLIKYFESIP (253 aa)) is the ABC transporter 2 domain. 883 to 890 (GVSGAGKT) provides a ligand contact to ATP. The 215-residue stretch at 1163–1377 (TQCMACLWKQ…TLYGLVASQF (215 aa)) folds into the ABC transmembrane type-2 2 domain. A run of 7 helical transmembrane segments spans residues 1184–1204 (AVRLIFTTFIALIFGTMFWDI), 1214–1234 (LVNAMGSMYAAVLFLGVQNSS), 1270–1290 (IPYIFVQATVYGLIVYSMIGF), 1301–1321 (FFFMFFTFLYFTFFGMMTVAV), 1327–1347 (VASIVAGFFYTVWNLFSGFIV), 1358–1378 (WYYWGCPIAWTLYGLVASQFG), and 1408–1428 (VVAAVIVAFAVVFAFTFALGI).

This sequence belongs to the ABC transporter superfamily. ABCG family. PDR (TC 3.A.1.205) subfamily. Roots, petals and leaf epidermis, where it is confined to glandular trichomes (at protein level).

Its subcellular location is the cell membrane. Excretes secondary metabolites such as terpenes. Involved in both constitutive and jasmonic acid-dependent induced defense. Confers some resistance to sclareol and B.cinerea. This Nicotiana plumbaginifolia (Leadwort-leaved tobacco) protein is Pleiotropic drug resistance protein 1 (PDR1).